Consider the following 285-residue polypeptide: Probable endonuclease 4 (285 aa).

Histidine 69, histidine 109, glutamate 145, aspartate 179, histidine 182, histidine 216, aspartate 229, histidine 231, and glutamate 261 together coordinate Zn(2+).

This sequence belongs to the AP endonuclease 2 family. Zn(2+) serves as cofactor.

It carries out the reaction Endonucleolytic cleavage to 5'-phosphooligonucleotide end-products.. Functionally, endonuclease IV plays a role in DNA repair. It cleaves phosphodiester bonds at apurinic or apyrimidinic (AP) sites, generating a 3'-hydroxyl group and a 5'-terminal sugar phosphate. The sequence is that of Probable endonuclease 4 from Salmonella typhi.